The chain runs to 1413 residues: Zinc finger SWIM domain-containing protein 8 (1413 aa).

3 positions are modified to phosphoserine: Ser36, Ser48, and Ser53. The disordered stretch occupies residues 45–65 (RKQSAGPNSPTGGGGGGGSGG). A compositionally biased stretch (gly residues) spans 55 to 65 (TGGGGGGGSGG). The SWIM-type zinc-finger motif lies at 172 to 208 (YNVAVMFDRCRVTSCSCTCGAGAKWCTHVVALCLFRI). Positions 600-817 (ESQTHKPQTL…ESHAPHVPNQ (218 aa)) are disordered. Polar residues predominate over residues 604 to 625 (HKPQTLSSFYSSSRPATASQRS). The segment covering 704–715 (SRGGYNGRGWGS) has biased composition (gly residues). Thr724 bears the Phosphothreonine mark. The segment covering 729–744 (IDSSAPETTSDSSPTL) has biased composition (polar residues). Residues Ser738, Ser741, and Ser745 each carry the phosphoserine modification. Positions 759-794 (GRGQDSDSISSSSSDSLGSSSSSGSRRASASGGARA) are enriched in low complexity. A compositionally biased stretch (basic and acidic residues) spans 795-811 (KTVEVGRYKGRRPESHA). A phosphoserine mark is found at Ser852 and Ser1412.

It belongs to the ZSWIM8 family. Component of the SCF-like E3 ubiquitin-protein ligase complex which contains CUL3, RBX1, ELOB, ELOC and ZSWIM8. Interacts with DAB1.

The protein resides in the cytoplasm. Its subcellular location is the cytosol. It functions in the pathway protein modification; protein ubiquitination. Functionally, substrate recognition component of a SCF-like E3 ubiquitin-protein ligase complex that promotes target-directed microRNA degradation (TDMD), a process that mediates degradation of microRNAs (miRNAs). The SCF-like E3 ubiquitin-protein ligase complex acts by catalyzing ubiquitination and subsequent degradation of AGO proteins (AGO1, AGO2, AGO3 and/or AGO4), thereby exposing miRNAs for degradation. Specifically recognizes and binds AGO proteins when they are engaged with a TDMD target. May also acts as a regulator of axon guidance: specifically recognizes misfolded ROBO3 and promotes its ubiquitination and subsequent degradation. Plays an essential role for proper embryonic development of heart and lung. Controls protein quality of DAB1, a key signal molecule for brain development, thus protecting its signaling strength. Mechanistically, recognizes intrinsically disordered regions of DAB1 and eliminates misfolded DAB1 that cannot be properly phosphorylated. This is Zinc finger SWIM domain-containing protein 8 from Bos taurus (Bovine).